A 799-amino-acid chain; its full sequence is MPERLAEMLLDLWTPLIILWITLPPCIYMAPMNQSQVLMSGSPLELNSLGEEQRILNRSKRGWVWNQMFVLEEFSGPEPILVGRLHTDLDPGSKKIKYILSGDGAGTIFQINDVTGDIHAIKRLDREEKAEYTLTAQAVDWETSKPLEPPSEFIIKVQDINDNAPEFLNGPYHATVPEMSILGTSVTNVTATDADDPVYGNSAKLVYSILEGQPYFSIEPETAIIKTALPNMDREAKEEYLVVIQAKDMGGHSGGLSGTTTLTVTLTDVNDNPPKFAQSLYHFSVPEDVVLGTAIGRVKANDQDIGENAQSSYDIIDGDGTALFEITSDAQAQDGIIRLRKPLDFETKKSYTLKVEAANVHIDPRFSGRGPFKDTATVKIVVEDADEPPVFSSPTYLLEVHENAALNSVIGQVTARDPDITSSPIRFSIDRHTDLERQFNINADDGKITLATPLDRELSVWHNITIIATEIRNHSQISRVPVAIKVLDVNDNAPEFASEYEAFLCENGKPGQVIQTVSAMDKDDPKNGHYFLYSLLPEMVNNPNFTIKKNEDNSLSILAKHNGFNRQKQEVYLLPIIISDSGNPPLSSTSTLTIRVCGCSNDGVVQSCNVEAYVLPIGLSMGALIAILACIILLLVIVVLFVTLRRHKNEPLIIKDDEDVRENIIRYDDEGGGEEDTEAFDIATLQNPDGINGFLPRKDIKPDLQFMPRQGLAPVPNGVDVDEFINVRLHEADNDPTAPPYDSIQIYGYEGRGSVAGSLSSLESTTSDSDQNFDYLSDWGPRFKRLGELYSVGESDKET.

An N-terminal signal peptide occupies residues 1–29 (MPERLAEMLLDLWTPLIILWITLPPCIYM). The propeptide occupies 30–61 (APMNQSQVLMSGSPLELNSLGEEQRILNRSKR). Residues Asn33 and Asn57 are each glycosylated (N-linked (GlcNAc...) asparagine). Cadherin domains follow at residues 62-167 (GWVW…APEF), 168-276 (LNGP…PPKF), 277-391 (AQSL…PPVF), 392-494 (SSPT…DNAP), and 495-616 (EFAS…YVLP). Residues 62–621 (GWVWNQMFVL…AYVLPIGLSM (560 aa)) are Extracellular-facing. N-linked (GlcNAc...) asparagine glycosylation occurs at Asn188. Asn463, Asn473, and Asn544 each carry an N-linked (GlcNAc...) asparagine glycan. The helical transmembrane segment at 622 to 642 (GALIAILACIILLLVIVVLFV) threads the bilayer. Topologically, residues 643-799 (TLRRHKNEPL…YSVGESDKET (157 aa)) are cytoplasmic. Ser795 is modified (phosphoserine).

In terms of tissue distribution, mainly expressed in brain. Found in certain nerve cell lines, such as retinoblasts, glioma cells and neuroblasts.

The protein localises to the cell membrane. Functionally, cadherins are calcium-dependent cell adhesion proteins. They preferentially interact with themselves in a homophilic manner in connecting cells; cadherins may thus contribute to the sorting of heterogeneous cell types. This chain is Cadherin-8 (CDH8), found in Homo sapiens (Human).